A 284-amino-acid chain; its full sequence is uncharacterized protein (284 aa).

The signal sequence occupies residues 1-24 (MLYSRESRTTVLFLALVTSLTVLC). Over 25–84 (HSVDVTTVFTTSTITEITTVTAAPQPQNKAETALNTATNIIQTMQFLFNCAPFKWKGPLK) the chain is Cytoplasmic. Residues 85-104 (ITSCALNFIVLLLTAWGYLL) form a helical membrane-spanning segment. The Extracellular portion of the chain corresponds to 105 to 284 (KYLQENKLNS…SVHMYSSSLL (180 aa)). Asn270 carries an N-linked (GlcNAc...) asparagine glycan.

The protein to yeast YNL033w.

Its subcellular location is the cell membrane. This is an uncharacterized protein from Saccharomyces cerevisiae (strain ATCC 204508 / S288c) (Baker's yeast).